A 264-amino-acid polypeptide reads, in one-letter code: tRNA pseudouridine synthase A (264 aa).

The active-site Nucleophile is the Asp-51. Tyr-109 lines the substrate pocket.

It belongs to the tRNA pseudouridine synthase TruA family. In terms of assembly, homodimer.

The enzyme catalyses uridine(38/39/40) in tRNA = pseudouridine(38/39/40) in tRNA. Its function is as follows. Formation of pseudouridine at positions 38, 39 and 40 in the anticodon stem and loop of transfer RNAs. This Vibrio parahaemolyticus serotype O3:K6 (strain RIMD 2210633) protein is tRNA pseudouridine synthase A.